The sequence spans 664 residues: DNA ligase (664 aa).

NAD(+) is bound by residues 31–35 (DYEFD), 80–81 (SL), and Glu-110. Lys-112 functions as the N6-AMP-lysine intermediate in the catalytic mechanism. Positions 133 and 169 each coordinate NAD(+). A BRCT 1 domain is found at 237–257 (LEKARKWGFKVPAESELKDSI). NAD(+)-binding residues include Lys-284 and Lys-308. Zn(2+) contacts are provided by Cys-402, Cys-405, Cys-420, and Cys-426. The 79-residue stretch at 586 to 664 (NQTNILEGNT…SEEDFLKMLE (79 aa)) folds into the BRCT 2 domain.

The protein belongs to the NAD-dependent DNA ligase family. LigA subfamily. Requires Mg(2+) as cofactor. Mn(2+) is required as a cofactor.

It catalyses the reaction NAD(+) + (deoxyribonucleotide)n-3'-hydroxyl + 5'-phospho-(deoxyribonucleotide)m = (deoxyribonucleotide)n+m + AMP + beta-nicotinamide D-nucleotide.. Functionally, DNA ligase that catalyzes the formation of phosphodiester linkages between 5'-phosphoryl and 3'-hydroxyl groups in double-stranded DNA using NAD as a coenzyme and as the energy source for the reaction. It is essential for DNA replication and repair of damaged DNA. This is DNA ligase from Christiangramia forsetii (strain DSM 17595 / CGMCC 1.15422 / KT0803) (Gramella forsetii).